Reading from the N-terminus, the 283-residue chain is Type III pantothenate kinase (283 aa).

9-16 is a binding site for ATP; sequence DIGNTRLK. Substrate contacts are provided by residues tyrosine 116 and 123-126; that span reads GVDR. Aspartate 125 functions as the Proton acceptor in the catalytic mechanism. ATP is bound at residue threonine 149. Residue threonine 211 participates in substrate binding.

It belongs to the type III pantothenate kinase family. As to quaternary structure, homodimer. It depends on NH4(+) as a cofactor. K(+) serves as cofactor.

Its subcellular location is the cytoplasm. It carries out the reaction (R)-pantothenate + ATP = (R)-4'-phosphopantothenate + ADP + H(+). It participates in cofactor biosynthesis; coenzyme A biosynthesis; CoA from (R)-pantothenate: step 1/5. Its function is as follows. Catalyzes the phosphorylation of pantothenate (Pan), the first step in CoA biosynthesis. In Cupriavidus taiwanensis (strain DSM 17343 / BCRC 17206 / CCUG 44338 / CIP 107171 / LMG 19424 / R1) (Ralstonia taiwanensis (strain LMG 19424)), this protein is Type III pantothenate kinase.